We begin with the raw amino-acid sequence, 86 residues long: Kappa-theraphotoxin-Cg1a 1 (86 aa).

A signal peptide spans 1 to 21; the sequence is MKVSVLITLAVLGVMFVWASA. Positions 22 to 50 are excised as a propeptide; sequence AELEERGSDQRDSPAWLKSMERIFQSGER. Intrachain disulfides connect Cys-52–Cys-66, Cys-59–Cys-71, and Cys-65–Cys-78. The tract at residues 55-56 is involved in active face; the sequence is MF. Phe-84 carries the phenylalanine amide modification.

This sequence belongs to the neurotoxin 10 (Hwtx-1) family. 28 (Jztx-11) subfamily. In terms of tissue distribution, expressed by the venom gland.

It is found in the secreted. This toxin acts as a voltage-dependent gating-modifier. It inhibits the sodium conductance (IC(50)=124 nM) and slows the fast inactivation (EC(50)=1180 nM) of Nav1.5/SCN5A. It significantly shifts the activation to more depolarized voltages and decreases the deactivation of Nav1.5 currents upon extreme depolarization, but only slightly affects voltage-dependence of steady-state inactivation. In addition, this toxin causes an approximately five-fold decrease in the rate of recovery from inactivation and an approximately 1.9-fold reduction in the closed-state inactivation rate. This toxin integrates the functions of site 3 toxins (alpha-scorpion toxins) with site 4 toxins (beta-scorpion and spider toxins) by targeting multiple sites on Nav1.5. Also shows inhibition of voltage-gated potassium channels (5 uM completely inhibits Kv2.1/KCNB1, whereas 5 uM moderately inhibits Kv4.2/KCND2 Kv4.1/KCND1 channels). The sequence is that of Kappa-theraphotoxin-Cg1a 1 from Chilobrachys guangxiensis (Chinese earth tiger tarantula).